A 380-amino-acid polypeptide reads, in one-letter code: Cytochrome b (380 aa).

4 helical membrane passes run 34-54 (FGSL…LLAM), 78-99 (WLIR…YLHI), 114-134 (WNTG…GYVL), and 179-199 (FFAL…IHLT). Heme b is bound by residues His-84 and His-98. His-183 and His-197 together coordinate heme b. Residue His-202 coordinates a ubiquinone. 4 helical membrane-spanning segments follow: residues 227 to 247 (LKDI…ALFS), 289 to 309 (LGGV…PLLH), 321 to 341 (LSQL…WVGS), and 348 to 368 (FIII…ILLP).

Belongs to the cytochrome b family. In terms of assembly, the cytochrome bc1 complex contains 11 subunits: 3 respiratory subunits (MT-CYB, CYC1 and UQCRFS1), 2 core proteins (UQCRC1 and UQCRC2) and 6 low-molecular weight proteins (UQCRH/QCR6, UQCRB/QCR7, UQCRQ/QCR8, UQCR10/QCR9, UQCR11/QCR10 and a cleavage product of UQCRFS1). This cytochrome bc1 complex then forms a dimer. The cofactor is heme b.

It is found in the mitochondrion inner membrane. In terms of biological role, component of the ubiquinol-cytochrome c reductase complex (complex III or cytochrome b-c1 complex) that is part of the mitochondrial respiratory chain. The b-c1 complex mediates electron transfer from ubiquinol to cytochrome c. Contributes to the generation of a proton gradient across the mitochondrial membrane that is then used for ATP synthesis. In Pelagodroma marina (White-faced storm-petrel), this protein is Cytochrome b (MT-CYB).